A 110-amino-acid polypeptide reads, in one-letter code: UPF0060 membrane protein Haur_1798 (110 aa).

4 helical membrane-spanning segments follow: residues 7–27, 33–53, 63–83, and 89–109; these read VVLF…VWQW, SIWF…LPTL, VYAA…WLID, and QPSL…LYWP.

The protein belongs to the UPF0060 family.

It is found in the cell membrane. The protein is UPF0060 membrane protein Haur_1798 of Herpetosiphon aurantiacus (strain ATCC 23779 / DSM 785 / 114-95).